The chain runs to 130 residues: Gonadotropin subunit beta-1 (130 aa).

Residues 1-18 form the signal peptide; it reads MRMRFVVMVILLPALMMS. 5 cysteine pairs are disulfide-bonded: Cys26–Cys74, Cys40–Cys89, Cys51–Cys105, Cys55–Cys107, and Cys110–Cys117. The N-linked (GlcNAc...) asparagine glycan is linked to Asn30.

Belongs to the glycoprotein hormones subunit beta family. In terms of assembly, heterodimer of an alpha and a beta chain.

It is found in the secreted. In terms of biological role, involved in gametogenesis and steroidogenesis. This Carassius auratus (Goldfish) protein is Gonadotropin subunit beta-1 (cgba).